We begin with the raw amino-acid sequence, 496 residues long: Probable cytosol aminopeptidase (496 aa).

Residues Lys-264 and Asp-269 each coordinate Mn(2+). Lys-276 is an active-site residue. Mn(2+)-binding residues include Asp-287, Asp-346, and Glu-348. The active site involves Arg-350.

Belongs to the peptidase M17 family. It depends on Mn(2+) as a cofactor.

It is found in the cytoplasm. The catalysed reaction is Release of an N-terminal amino acid, Xaa-|-Yaa-, in which Xaa is preferably Leu, but may be other amino acids including Pro although not Arg or Lys, and Yaa may be Pro. Amino acid amides and methyl esters are also readily hydrolyzed, but rates on arylamides are exceedingly low.. It catalyses the reaction Release of an N-terminal amino acid, preferentially leucine, but not glutamic or aspartic acids.. Presumably involved in the processing and regular turnover of intracellular proteins. Catalyzes the removal of unsubstituted N-terminal amino acids from various peptides. The chain is Probable cytosol aminopeptidase from Geobacter sulfurreducens (strain ATCC 51573 / DSM 12127 / PCA).